Here is a 244-residue protein sequence, read N- to C-terminus: MNADAEGHSGAVVPAQSPEGSSAADDFVPSALGTREHWDAVYERELRTFQEYGDTGEIWFGEESMNRLIRWMQKHKIPLDASVLDIGTGNGVFLVELVKHGFSNITGIDYSPSAIKLSASILEKEGLSNINLKVEDFLNPSTKLSGFHVCVDKGTYDAISLNPDNAIEKRKQYVMSLSRVLEVKGFFLITSCNWTKAELLDAFSEGFELFEELPTPKFSFGGRSGNTVAALVFQKRGTSLDKIS.

The tract at residues 1 to 27 (MNADAEGHSGAVVPAQSPEGSSAADDF) is disordered. S21 bears the Phosphoserine mark.

Belongs to the class I-like SAM-binding methyltransferase superfamily. EFM4 family.

The protein resides in the cytoplasm. Its subcellular location is the nucleus. It catalyses the reaction L-lysyl-[protein] + 3 S-adenosyl-L-methionine = N(6),N(6),N(6)-trimethyl-L-lysyl-[protein] + 3 S-adenosyl-L-homocysteine + 3 H(+). Its function is as follows. Protein-lysine methyltransferase that selectively catalyzes the trimethylation of EEF1A at 'Lys-318'. The protein is EEF1A lysine methyltransferase 2 of Mus musculus (Mouse).